The primary structure comprises 514 residues: MVLDLDLFRVDKGGDPALIRETQEKRFKDPGLVDQLVKADSEWRRCRFRADNLNKLKNLCSKTIGEKMKKKEPVGDDESIPENVLNFDDVTADTLTNLKVSQIKKVRLLIDEAILKCDAERIKLEAERFESLREIGNLLHPSVPISNDEDADNKVERIWGDCTVRKKYSHVDLVVMVDGFEGEKGAVVAGSRGYFLKGVLVFLEQALIQYALRTLRNRGYTPIYTPFFMRKEVMQEVAQLSQFDEELYKVIGKGSEKSDDNSYDEKYLIATSEQPIAALHRDEWLRPEDLPIKYAGLSTCFRQEVGSHGRDTRGIFRVHQFEKIEQFVYSSPHDNKSWEMFEEMIATAEEFYQSLGIPYHIVNIVSGSLNHAASKKLDLEAWFPGSGAFRELVSCSNCTDYQARRLRIRYGQTKKMMDKVEFVHMLNATMCATTRTICAILENYQTEKGIIVPEKLKEFMPPGLQELIPFVKPAPIDQEPSKKQKKQHEGSKKKAAARDVTLENRLQNMEVTDA.

Methionine 1 is modified (N-acetylmethionine). The interaction with tRNA stretch occupies residues 9 to 61; sequence RVDKGGDPALIRETQEKRFKDPGLVDQLVKADSEWRRCRFRADNLNKLKNLCS. The residue at position 241 (serine 241) is a Phosphoserine. Threonine 271 and arginine 302 together coordinate L-serine. ATP is bound by residues 302–304 and 318–321; these read RQE and VHQF. Residue lysine 323 is modified to N6-acetyllysine. Glutamate 325 is a binding site for L-serine. Residue 391 to 394 coordinates ATP; that stretch reads ELVS. Asparagine 427 is an L-serine binding site. The disordered stretch occupies residues 472 to 514; sequence KPAPIDQEPSKKQKKQHEGSKKKAAARDVTLENRLQNMEVTDA. Over residues 479–502 the composition is skewed to basic and acidic residues; that stretch reads EPSKKQKKQHEGSKKKAAARDVTL. The Nuclear localization signal motif lies at 482–494; sequence KKQKKQHEGSKKK. Over residues 504–514 the composition is skewed to polar residues; sequence NRLQNMEVTDA.

It belongs to the class-II aminoacyl-tRNA synthetase family. Type-1 seryl-tRNA synthetase subfamily. In terms of assembly, homodimer. The tRNA molecule may bind across the dimer. Interacts with SIRT2. Interacts with METTL6; interaction is required for the tRNA N(3)-methylcytidine methyltransferase activity of METTL6.

It is found in the cytoplasm. The protein resides in the nucleus. The catalysed reaction is tRNA(Ser) + L-serine + ATP = L-seryl-tRNA(Ser) + AMP + diphosphate + H(+). It carries out the reaction tRNA(Sec) + L-serine + ATP = L-seryl-tRNA(Sec) + AMP + diphosphate + H(+). Its pathway is aminoacyl-tRNA biosynthesis; selenocysteinyl-tRNA(Sec) biosynthesis; L-seryl-tRNA(Sec) from L-serine and tRNA(Sec): step 1/1. Catalyzes the attachment of serine to tRNA(Ser) in a two-step reaction: serine is first activated by ATP to form Ser-AMP and then transferred to the acceptor end of tRNA(Ser). Is probably also able to aminoacylate tRNA(Sec) with serine, to form the misacylated tRNA L-seryl-tRNA(Sec), which will be further converted into selenocysteinyl-tRNA(Sec). In the nucleus, binds to the VEGFA core promoter and prevents MYC binding and transcriptional activation by MYC. Recruits SIRT2 to the VEGFA promoter, promoting deacetylation of histone H4 at 'Lys-16' (H4K16). Thereby, inhibits the production of VEGFA and sprouting angiogenesis mediated by VEGFA. This chain is Serine--tRNA ligase, cytoplasmic (SARS1), found in Oryctolagus cuniculus (Rabbit).